We begin with the raw amino-acid sequence, 363 residues long: Ribonuclease P protein subunit p40 (363 aa).

Component of nuclear RNase P and RNase MRP ribonucleoproteins. RNase P consists of a catalytic RNA moiety and about 10 protein subunits; POP1, POP4, POP5, POP7, RPP14, RPP21, RPP25, RPP30, RPP38 and RPP40. Within the RNase P complex, POP1, POP7 and RPP25 form the 'finger' subcomplex, POP5, RPP14, RPP40 and homodimeric RPP30 form the 'palm' subcomplex, and RPP21, POP4 and RPP38 form the 'wrist' subcomplex. All subunits of the RNase P complex interact with the catalytic RNA. Several subunits of RNase P are also part of the RNase MRP complex. RNase MRP consists of a catalytic RNA moiety and about 8 protein subunits; POP1, POP7, RPP25, RPP30, RPP38, RPP40 and possibly also POP4 and POP5.

The protein localises to the nucleus. It is found in the nucleolus. In terms of biological role, component of ribonuclease P, a ribonucleoprotein complex that generates mature tRNA molecules by cleaving their 5'-ends. Also a component of the MRP ribonuclease complex, which cleaves pre-rRNA sequences. This Mus musculus (Mouse) protein is Ribonuclease P protein subunit p40 (Rpp40).